The primary structure comprises 339 residues: MFYKIAQKVMFQMDPERAHHLAIGSLKMTANSPLTCLYGQTIAPAPVSVMGLTFPNPVGLAAGMDKDGESIDAFHAMGFGHVEVGTVTPRPQPGNDLPRLFRLKPAKGIINRMGFNNKGVDNLVKNLIAKKTNIMVGVNIGKNKDTPVEQGKDDYLICMDKVYLHAAYIAVNISSPNTPGLRSLQYGDLLDELLSAIKTKQLELAEKHKKYVPIALKIAPDLTIEEIENIAQALIKNKFDGAIATNTTLTRDGVSGLANANESGGLSGKPLTELSTKVIKQLAICLKGQIPIIGVGGINSAEDALAKFDAGATMVQIYSGFIYQGPKLIKEIVNAYRLK.

Residues 62–66 (AGMDK) and Thr-86 contribute to the FMN site. Lys-66 contacts substrate. 111-115 (NRMGF) contributes to the substrate binding site. Positions 139 and 172 each coordinate FMN. Asn-172 lines the substrate pocket. The Nucleophile role is filled by Ser-175. Position 177 (Asn-177) interacts with substrate. Positions 217 and 245 each coordinate FMN. 246 to 247 (NT) provides a ligand contact to substrate. Residues Gly-268, Gly-297, and 318 to 319 (YS) each bind FMN.

It belongs to the dihydroorotate dehydrogenase family. Type 2 subfamily. Monomer. It depends on FMN as a cofactor.

It is found in the cell membrane. It catalyses the reaction (S)-dihydroorotate + a quinone = orotate + a quinol. Its pathway is pyrimidine metabolism; UMP biosynthesis via de novo pathway; orotate from (S)-dihydroorotate (quinone route): step 1/1. In terms of biological role, catalyzes the conversion of dihydroorotate to orotate with quinone as electron acceptor. The sequence is that of Dihydroorotate dehydrogenase (quinone) from Shewanella baltica (strain OS185).